The chain runs to 94 residues: Sapecin (94 aa).

The N-terminal stretch at 1 to 23 (MKSFIVLAVTLCLAAFFMGQSVA) is a signal peptide. Positions 24-54 (SPAAAAEESKFVDGLHALKTIEPELHGRYKR) are excised as a propeptide. Disulfide bonds link Cys57–Cys84, Cys70–Cys90, and Cys74–Cys92.

The protein belongs to the invertebrate defensin family. Type 1 subfamily. As to expression, hemocytes and fat body.

The protein localises to the secreted. Its function is as follows. Sapecins, which are potent bactericidal proteins, are produced in response to injury. Sapecin is cytotoxic to Gram-positive bacteria, and to a lesser extent against Gram-negative bacteria. This chain is Sapecin, found in Sarcophaga peregrina (Flesh fly).